The following is a 456-amino-acid chain: Arginine biosynthesis bifunctional protein ArgJ, mitochondrial (456 aa).

Substrate-binding residues include threonine 184, lysine 213, threonine 224, glutamate 311, asparagine 451, and threonine 456. The Nucleophile role is filled by threonine 224.

It belongs to the ArgJ family. As to quaternary structure, heterodimer of an alpha and a beta chain. In terms of processing, the alpha and beta chains are autoproteolytically processed from a single precursor protein within the mitochondrion.

Its subcellular location is the mitochondrion matrix. The enzyme catalyses N(2)-acetyl-L-ornithine + L-glutamate = N-acetyl-L-glutamate + L-ornithine. The catalysed reaction is L-glutamate + acetyl-CoA = N-acetyl-L-glutamate + CoA + H(+). It functions in the pathway amino-acid biosynthesis; L-arginine biosynthesis; L-ornithine and N-acetyl-L-glutamate from L-glutamate and N(2)-acetyl-L-ornithine (cyclic): step 1/1. It participates in amino-acid biosynthesis; L-arginine biosynthesis; N(2)-acetyl-L-ornithine from L-glutamate: step 1/4. Functionally, catalyzes two activities which are involved in the cyclic version of arginine biosynthesis: the synthesis of acetylglutamate from glutamate and acetyl-CoA, and of ornithine by transacetylation between acetylornithine and glutamate. This Neosartorya fischeri (strain ATCC 1020 / DSM 3700 / CBS 544.65 / FGSC A1164 / JCM 1740 / NRRL 181 / WB 181) (Aspergillus fischerianus) protein is Arginine biosynthesis bifunctional protein ArgJ, mitochondrial.